The primary structure comprises 325 residues: Beta-ketoacyl-[acyl-carrier-protein] synthase III (325 aa).

Active-site residues include cysteine 112 and histidine 250. Residues 251 to 255 (QANIR) are ACP-binding. Asparagine 280 is a catalytic residue.

This sequence belongs to the thiolase-like superfamily. FabH family. In terms of assembly, homodimer.

The protein localises to the cytoplasm. It catalyses the reaction malonyl-[ACP] + acetyl-CoA + H(+) = 3-oxobutanoyl-[ACP] + CO2 + CoA. It functions in the pathway lipid metabolism; fatty acid biosynthesis. In terms of biological role, catalyzes the condensation reaction of fatty acid synthesis by the addition to an acyl acceptor of two carbons from malonyl-ACP. Catalyzes the first condensation reaction which initiates fatty acid synthesis and may therefore play a role in governing the total rate of fatty acid production. Possesses both acetoacetyl-ACP synthase and acetyl transacylase activities. Its substrate specificity determines the biosynthesis of branched-chain and/or straight-chain of fatty acids. The polypeptide is Beta-ketoacyl-[acyl-carrier-protein] synthase III (Streptococcus mutans serotype c (strain ATCC 700610 / UA159)).